The primary structure comprises 435 residues: Glutamyl-tRNA reductase (435 aa).

Substrate is bound by residues 49 to 52, Ser-109, 114 to 116, and Gln-120; these read TCNR and ETQ. Cys-50 (nucleophile) is an active-site residue. Residue 189–194 coordinates NADP(+); that stretch reads GAGEMS.

This sequence belongs to the glutamyl-tRNA reductase family. In terms of assembly, homodimer.

The enzyme catalyses (S)-4-amino-5-oxopentanoate + tRNA(Glu) + NADP(+) = L-glutamyl-tRNA(Glu) + NADPH + H(+). It functions in the pathway porphyrin-containing compound metabolism; protoporphyrin-IX biosynthesis; 5-aminolevulinate from L-glutamyl-tRNA(Glu): step 1/2. In terms of biological role, catalyzes the NADPH-dependent reduction of glutamyl-tRNA(Glu) to glutamate 1-semialdehyde (GSA). This Listeria monocytogenes serotype 4b (strain F2365) protein is Glutamyl-tRNA reductase.